The primary structure comprises 205 residues: Large ribosomal subunit protein bL25 (205 aa).

The disordered stretch occupies residues 185 to 205 (PAGAVSEAAEGGEAAGETPAA). The segment covering 186 to 205 (AGAVSEAAEGGEAAGETPAA) has biased composition (low complexity).

It belongs to the bacterial ribosomal protein bL25 family. CTC subfamily. Part of the 50S ribosomal subunit; part of the 5S rRNA/L5/L18/L25 subcomplex. Contacts the 5S rRNA. Binds to the 5S rRNA independently of L5 and L18.

This is one of the proteins that binds to the 5S RNA in the ribosome where it forms part of the central protuberance. In Cupriavidus taiwanensis (strain DSM 17343 / BCRC 17206 / CCUG 44338 / CIP 107171 / LMG 19424 / R1) (Ralstonia taiwanensis (strain LMG 19424)), this protein is Large ribosomal subunit protein bL25.